The chain runs to 338 residues: Protein FosB (338 aa).

Disordered stretches follow at residues Met1–Phe54 and Ala80–Arg162. The span at Ser13–Ser31 shows a compositional bias: polar residues. Phosphoserine is present on Ser27. Gly residues predominate over residues Ser113–Ser124. The span at Thr125–Pro137 shows a compositional bias: low complexity. The 64-residue stretch at Glu155 to His218 folds into the bZIP domain. Residues Lys157–Arg182 form a basic motif region. Residues Leu183–Leu211 form a leucine-zipper region. 2 disordered regions span residues Cys222 to Asp271 and Ala315 to Leu338. Over residues Leu256–Pro265 the composition is skewed to pro residues. The segment covering Gln318 to Leu338 has biased composition (polar residues).

The protein belongs to the bZIP family. Fos subfamily. In terms of assembly, heterodimer; binds to DNA as heterodimer. Component of an AP-1 transcription factor complex; composed of FOS-JUN heterodimers. As part of the AP-1 transcription factor complex, forms heterodimers with JUN, JUNB or JUND, thereby binding to the AP-1 consensus sequence and stimulating transcription. Interacts with the BAF multiprotein chromatin-remodeling complex subunits SMARCB1 and SMARCD1. Interacts with ARID1A and JUN. In terms of processing, phosphorylated.

The protein localises to the nucleus. Its function is as follows. Heterodimerizes with proteins of the JUN family to form an AP-1 transcription factor complex, thereby enhancing their DNA binding activity to an AP-1 consensus sequence 5'-TGA[GC]TCA-3' and enhancing their transcriptional activity. Exhibits transactivation activity in vitro. As part of the AP-1 complex, facilitates enhancer selection together with cell-type-specific transcription factors by collaboratively binding to nucleosomal enhancers and recruiting the SWI/SNF (BAF) chromatin remodeling complex to establish accessible chromatin. Together with JUN, plays a role in activation-induced cell death of T cells by binding to the AP-1 promoter site of FASLG/CD95L, and inducing its transcription in response to activation of the TCR/CD3 signaling pathway. Involved in the display of nurturing behavior towards newborns. May play a role in neurogenesis in the hippocampus and in learning and memory-related tasks by regulating the expression of various genes involved in neurogenesis, depression and epilepsy. Implicated in behavioral responses related to morphine reward and spatial memory. This chain is Protein FosB (FOSB), found in Canis lupus familiaris (Dog).